The primary structure comprises 167 residues: I-Kappa-B like protein F2 (167 aa).

ANK repeat units lie at residues H54 to G86, F91 to I121, and L125 to V154.

It belongs to the polydnaviridae I-Kappa-B-like protein family.

Suppresses the host immune response through NF-kappa-B inactivation. Possesses ankyrin repeat domains required for NF-kappa-B binding but lacks the regulatory regions required for dissociation from NF-kappa-B and degradation. Therefore, prevents host NF-kappa-B release and subsequent activation. The polypeptide is I-Kappa-B like protein F2 (F3) (Microplitis demolitor bracovirus (isolate Webb) (MdBV)).